The sequence spans 660 residues: Nuclear factor erythroid 2-related factor 3 (660 aa).

The disordered stretch occupies residues Ser120–Ala214. Positions Gly123 to Asp135 are enriched in gly residues. Composition is skewed to basic and acidic residues over residues Met173–Gln186 and Ser204–Ala214. One can recognise a bZIP domain in the interval Leu541–Leu604. A basic motif region spans residues Arg543–Lys562. Residues Ile566–Ile573 are leucine-zipper.

The protein belongs to the bZIP family. CNC subfamily. In terms of assembly, heterodimer with MAFG, MAFK and other small MAF proteins that binds to the MAF recognition elements (MARE). In terms of tissue distribution, high level expression in brain, thymus, testis and placenta. Medium level expression in uterus, stomach and lung. Low level expression in kidney. No expression in heart, liver, spleen and ovary.

The protein localises to the nucleus. Activates erythroid-specific, globin gene expression. This Mus musculus (Mouse) protein is Nuclear factor erythroid 2-related factor 3 (Nfe2l3).